A 335-amino-acid chain; its full sequence is N-acetylglucosaminyl-phosphatidylinositol de-N-acetylase (335 aa).

Residues 3–23 (SAFTFLSLAIFPLALFIFWTL) form a helical membrane-spanning segment. N-linked (GlcNAc...) asparagine glycans are attached at residues Asn128 and Asn153.

The protein belongs to the PIGL family.

The protein localises to the endoplasmic reticulum membrane. It catalyses the reaction a 6-(N-acetyl-alpha-D-glucosaminyl)-1-(1,2-diacyl-sn-glycero-3-phospho)-1D-myo-inositol + H2O = a 6-(alpha-D-glucosaminyl)-1-(1,2-diacyl-sn-glycero-3-phospho)-1D-myo-inositol + acetate. Its pathway is glycolipid biosynthesis; glycosylphosphatidylinositol-anchor biosynthesis. Its function is as follows. Involved in the second step of GPI biosynthesis. De-N-acetylation of N-acetylglucosaminyl-phosphatidylinositol. In Arthroderma benhamiae (strain ATCC MYA-4681 / CBS 112371) (Trichophyton mentagrophytes), this protein is N-acetylglucosaminyl-phosphatidylinositol de-N-acetylase.